A 1232-amino-acid chain; its full sequence is Chromosome-associated kinesin KIF4A (1232 aa).

The region spanning 9 to 336 (PVRVALRCRP…LRYADRARKI (328 aa)) is the Kinesin motor domain. Residue 88–95 (GQTGSGKT) participates in ATP binding. Residues 350–999 (ELNHLKQQVQ…IKQKLTLLQV (650 aa)) are a coiled coil. Ser394 is subject to Phosphoserine. The interval 496 to 515 (AQVETSPETSRSSDAFTTQH) is disordered. Residues 497–515 (QVETSPETSRSSDAFTTQH) show a composition bias toward polar residues. A required for the interaction with PRC1 region spans residues 663–1232 (QWKQKKDKEV…GCSPIEEEAH (570 aa)). The Nuclear localization signal signature appears at 793-798 (PKLRRR). Residue Thr799 is modified to Phosphothreonine. 4 positions are modified to phosphoserine: Ser801, Ser810, Ser815, and Ser951. Phosphothreonine is present on Thr995. The globular stretch occupies residues 1000–1232 (ASRQKHLPKD…GCSPIEEEAH (233 aa)). A phosphoserine mark is found at Ser1001, Ser1013, Ser1017, Ser1028, and Ser1126. The tract at residues 1086-1144 (CSCKGWCGNKQCGCRKQKSDCGVDCCCDPTKCRNRQQGKDSLGTVERTQDSEGSFKLED) is CRD; required for [4Fe-4S] cluster binding and localization to the spindle midzone and midbody during anaphase and telophase. The interval 1122–1142 (QGKDSLGTVERTQDSEGSFKL) is disordered. Residues 1132–1142 (RTQDSEGSFKL) show a composition bias toward basic and acidic residues. At Thr1181 the chain carries Phosphothreonine. Ser1186 carries the post-translational modification Phosphoserine. Lys1194 is covalently cross-linked (Glycyl lysine isopeptide (Lys-Gly) (interchain with G-Cter in SUMO2)). Ser1225 is subject to Phosphoserine.

It belongs to the TRAFAC class myosin-kinesin ATPase superfamily. Kinesin family. Chromokinesin subfamily. As to quaternary structure, interacts with the cytosolic iron-sulfur protein assembly (CIA) complex components CIAO2B and MMS19; the interactions facilitate the transfer of Fe-S clusters to KIF4A to ensure proper localization of KIF4A to mitotic machinery components. Interacts (via C-terminus) with unphosphorylated PRC1 (via N-terminus); the interaction is required for the progression of mitosis. [2Fe-2S] cluster is required as a cofactor. [4Fe-4S] cluster serves as cofactor. In terms of tissue distribution, highly expressed in hematopoietic tissues, fetal liver, spleen, thymus and adult thymus and bone marrow. Lower levels are found in heart, testis, kidney, colon and lung.

It is found in the nucleus matrix. The protein resides in the cytoplasm. The protein localises to the cytoskeleton. Its subcellular location is the spindle. It localises to the midbody. It is found in the chromosome. In terms of biological role, iron-sulfur (Fe-S) cluster binding motor protein that has a role in chromosome segregation during mitosis. Translocates PRC1 to the plus ends of interdigitating spindle microtubules during the metaphase to anaphase transition, an essential step for the formation of an organized central spindle midzone and midbody and for successful cytokinesis. May play a role in mitotic chromosomal positioning and bipolar spindle stabilization. The polypeptide is Chromosome-associated kinesin KIF4A (KIF4A) (Homo sapiens (Human)).